Here is a 271-residue protein sequence, read N- to C-terminus: Formamidopyrimidine-DNA glycosylase (271 aa).

Residue Pro-2 is the Schiff-base intermediate with DNA of the active site. Catalysis depends on Glu-3, which acts as the Proton donor. Lys-57 (proton donor; for beta-elimination activity) is an active-site residue. Positions 90, 109, and 150 each coordinate DNA. The FPG-type zinc finger occupies 235 to 269; the sequence is LVYGNKDKPCPKCGGKIESLIIGQRNSFFCPKCQK. The Proton donor; for delta-elimination activity role is filled by Arg-259.

This sequence belongs to the FPG family. As to quaternary structure, monomer. It depends on Zn(2+) as a cofactor.

The enzyme catalyses Hydrolysis of DNA containing ring-opened 7-methylguanine residues, releasing 2,6-diamino-4-hydroxy-5-(N-methyl)formamidopyrimidine.. It carries out the reaction 2'-deoxyribonucleotide-(2'-deoxyribose 5'-phosphate)-2'-deoxyribonucleotide-DNA = a 3'-end 2'-deoxyribonucleotide-(2,3-dehydro-2,3-deoxyribose 5'-phosphate)-DNA + a 5'-end 5'-phospho-2'-deoxyribonucleoside-DNA + H(+). Functionally, involved in base excision repair of DNA damaged by oxidation or by mutagenic agents. Acts as a DNA glycosylase that recognizes and removes damaged bases. Has a preference for oxidized purines, such as 7,8-dihydro-8-oxoguanine (8-oxoG). Has AP (apurinic/apyrimidinic) lyase activity and introduces nicks in the DNA strand. Cleaves the DNA backbone by beta-delta elimination to generate a single-strand break at the site of the removed base with both 3'- and 5'-phosphates. This chain is Formamidopyrimidine-DNA glycosylase, found in Haemophilus influenzae (strain 86-028NP).